Reading from the N-terminus, the 201-residue chain is Large ribosomal subunit protein eL15A (201 aa).

Residues Ser-161–Asn-182 form a disordered region. The segment covering Lys-169–Arg-179 has biased composition (basic residues).

This sequence belongs to the eukaryotic ribosomal protein eL15 family. As to quaternary structure, component of the large ribosomal subunit (LSU). Mature yeast ribosomes consist of a small (40S) and a large (60S) subunit. The 40S small subunit contains 1 molecule of ribosomal RNA (18S rRNA) and at least 33 different proteins. The large 60S subunit contains 3 rRNA molecules (25S, 5.8S and 5S rRNA) and at least 46 different proteins.

It is found in the cytoplasm. Its subcellular location is the nucleus. It localises to the nucleolus. Functionally, component of the ribosome, a large ribonucleoprotein complex responsible for the synthesis of proteins in the cell. The small ribosomal subunit (SSU) binds messenger RNAs (mRNAs) and translates the encoded message by selecting cognate aminoacyl-transfer RNA (tRNA) molecules. The large subunit (LSU) contains the ribosomal catalytic site termed the peptidyl transferase center (PTC), which catalyzes the formation of peptide bonds, thereby polymerizing the amino acids delivered by tRNAs into a polypeptide chain. The nascent polypeptides leave the ribosome through a tunnel in the LSU and interact with protein factors that function in enzymatic processing, targeting, and the membrane insertion of nascent chains at the exit of the ribosomal tunnel. This chain is Large ribosomal subunit protein eL15A (rpl15), found in Schizosaccharomyces pombe (strain 972 / ATCC 24843) (Fission yeast).